The following is a 117-amino-acid chain: Large ribosomal subunit protein uL18 (117 aa).

It belongs to the universal ribosomal protein uL18 family. As to quaternary structure, part of the 50S ribosomal subunit; part of the 5S rRNA/L5/L18/L25 subcomplex. Contacts the 5S and 23S rRNAs.

Functionally, this is one of the proteins that bind and probably mediate the attachment of the 5S RNA into the large ribosomal subunit, where it forms part of the central protuberance. This is Large ribosomal subunit protein uL18 from Sphingopyxis alaskensis (strain DSM 13593 / LMG 18877 / RB2256) (Sphingomonas alaskensis).